Here is a 288-residue protein sequence, read N- to C-terminus: Nucleotide-binding protein APP7_0339 (288 aa).

An ATP-binding site is contributed by 8 to 15; that stretch reads GRSGSGKS. 56-59 lines the GTP pocket; it reads DIRN.

This sequence belongs to the RapZ-like family.

In terms of biological role, displays ATPase and GTPase activities. This Actinobacillus pleuropneumoniae serotype 7 (strain AP76) protein is Nucleotide-binding protein APP7_0339.